We begin with the raw amino-acid sequence, 159 residues long: MQIWHMEPFPCGDRRLPHHVFPPKKITTTQLGALAGVQYYKVDLEDTASMKKRLSAVKTEKNVTFTDVFTVSETMLDFDDKMEQFYEAQTQKEDVISLVVEGTCYYDVEPEDDSWIRVQLEKGDLIVIPKGLSHRFTTTPQNFVKIQRFFSRKVEGTQG.

This sequence belongs to the acireductone dioxygenase (ARD) family.

Its subcellular location is the cytoplasm. The protein resides in the nucleus. Functionally, probable inactive acireductone dioxygenase. The polypeptide is Probable inactive acireductone dioxygenase 2 (Caenorhabditis briggsae).